We begin with the raw amino-acid sequence, 1915 residues long: Protein NLRC5 (1915 aa).

Residues 103-137 form a disordered region; the sequence is LGAGEESCPGPQLYHGAKRPFQSYGSSPRRKNSKK. An NACHT domain is found at 223 to 542; that stretch reads RVTVLLGKAG…HTVDKDTLVE (320 aa). Residue 229–236 coordinates ATP; the sequence is GKAGMGKT. LRR repeat units lie at residues 622-646, 716-740, 744-771, 772-796, 871-898, 900-923, 930-953, 1006-1033, 1034-1055, 1138-1161, 1162-1184, 1240-1263, 1265-1292, 1348-1371, 1481-1504, 1519-1542, 1552-1575, 1576-1598, 1603-1626, 1631-1654, 1659-1682, 1687-1711, 1715-1738, 1741-1768, 1769-1795, 1821-1845, and 1849-1872; these read VAETQDLELARFTAQSLPSRLSFHN, MGSLKTLGLTGSRITAQGISHLIQT, CSQLEEVSLHDNQLKDPEVLSLVELLPS, LPKLQKLDLSRNSFSRSILLSLVKV, SPQLEEVNLSGNHLEDDGCRLVAEAASQ, HIAQKLDLSDNGLSQTGVTYVLKA, LEDLHISLLNNTVVLTFAQEPREQ, THNLDHLDLSDNSLGGKGVILLTELLPG, LGPLKSLNLSRNGLSMDAVFSL, EVQLSCKSLSDDSLKILLQCLPQL, PQLSLLQLRHTVLSSRSPFLLAD, CNALSQLDLTDNLLGDIGLRCLLE, LPQLPISGWLDLSHNNISQEGILYLLET, AQQLTELWLTKCHLDLPQLTMLLN, SKLLQNILLSSCELKSFRLTFSQV, CHHLEELDFSNNSLREEDTELLMG, KLHLSFLPLGASSLALLIQGLSRM, TLLQDLCLSHNQIGDVGTQCLAA, LPELRKFDLSHNQIGDVGTQCLAA, LPELRKFNLSHNQIGHVGTQCLAA, LPELRKFDLSRNQIGDVGTQCLAA, LPELRKFDLSGNRIGPAGGVQLVKS, FEHLEEIKLGNNALGEPTALELAQ, PPQLRVLCLPSSHLGPEGALGLAQALEQ, CPHIEEVSLAENNLAGGVPRFSKRLPL, FPALEKLLLSGNLLGDEVAAELAQV, and MGQLKKVNLEWNRITARGAQLLAQ.

Belongs to the NLRP family. In terms of assembly, interacts with CHUK and IKBKB; prevents CHUK and IKBKB phosphorylation and inhibits their kinase activity. Interacts with RIGI and IFIH1; blocks the interaction of MAVS to RIGI. In terms of tissue distribution, expressed in spleen, thymus and lung.

It localises to the cytoplasm. In terms of biological role, probable regulator of the NF-kappa-B and type I interferon signaling pathways. May also regulate the type II interferon signaling pathway. Plays a role in homeostatic control of innate immunity and in antiviral defense mechanisms. This is Protein NLRC5 (Nlrc5) from Mus musculus (Mouse).